Reading from the N-terminus, the 204-residue chain is Photosystem I reaction center subunit II-2, chloroplastic (204 aa).

The transit peptide at 1-44 directs the protein to the chloroplast; that stretch reads MATQAAGIFSPAITTTTSAVKKLHLFSSSHRPKSLSFTKTAIRA. Threonine 47 bears the Phosphothreonine mark. Residues 47-71 are disordered; the sequence is TESSSAAPAVKEAPVGFTPPQLDPN. A ferredoxin and ferredoxin-oxidoreductase binding region spans residues 137 to 145; sequence RLRSKYKIT.

It belongs to the PsaD family. As to quaternary structure, interacts with CURT1C.

Its subcellular location is the plastid. It is found in the chloroplast thylakoid membrane. PSAD can form complexes with ferredoxin and ferredoxin-oxidoreductase in photosystem I (PS I) reaction center. PSAD may encode the ferredoxin-docking protein. This Arabidopsis thaliana (Mouse-ear cress) protein is Photosystem I reaction center subunit II-2, chloroplastic (PSAD2).